A 97-amino-acid polypeptide reads, in one-letter code: Putative defensin-like protein 237 (97 aa).

An N-terminal signal peptide occupies residues 1–23; that stretch reads MRHATSPIVFCFLIFLVMNHVKG. Disulfide bonds link Cys30–Cys94, Cys40–Cys71, Cys48–Cys84, and Cys69–Cys86.

This sequence belongs to the DEFL family.

It localises to the secreted. This is Putative defensin-like protein 237 (SCRL21) from Arabidopsis thaliana (Mouse-ear cress).